A 565-amino-acid polypeptide reads, in one-letter code: CTP synthase (565 aa).

The amidoligase domain stretch occupies residues 1–272 (MARPKNVKHI…DKRVLKKLGI (272 aa)). Serine 18 contributes to the CTP binding site. Serine 18 is a UTP binding site. 19–24 (SLGKGI) lines the ATP pocket. An L-glutamine-binding site is contributed by tyrosine 59. An ATP-binding site is contributed by aspartate 76. 2 residues coordinate Mg(2+): aspartate 76 and glutamate 146. CTP is bound by residues 153-155 (DIE), 193-198 (KTKPTQ), and lysine 229. Residues 193 to 198 (KTKPTQ) and lysine 229 contribute to the UTP site. The Glutamine amidotransferase type-1 domain maps to 299-543 (TIAVCGKYTE…VAAAKAFAFG (245 aa)). Position 363 (glycine 363) interacts with L-glutamine. The Nucleophile; for glutamine hydrolysis role is filled by cysteine 390. L-glutamine is bound by residues 391–394 (LGMQ), glutamate 414, and arginine 471. Residues histidine 516 and glutamate 518 contribute to the active site.

This sequence belongs to the CTP synthase family. Homotetramer.

The enzyme catalyses UTP + L-glutamine + ATP + H2O = CTP + L-glutamate + ADP + phosphate + 2 H(+). It catalyses the reaction L-glutamine + H2O = L-glutamate + NH4(+). The catalysed reaction is UTP + NH4(+) + ATP = CTP + ADP + phosphate + 2 H(+). The protein operates within pyrimidine metabolism; CTP biosynthesis via de novo pathway; CTP from UDP: step 2/2. With respect to regulation, allosterically activated by GTP, when glutamine is the substrate; GTP has no effect on the reaction when ammonia is the substrate. The allosteric effector GTP functions by stabilizing the protein conformation that binds the tetrahedral intermediate(s) formed during glutamine hydrolysis. Inhibited by the product CTP, via allosteric rather than competitive inhibition. Its function is as follows. Catalyzes the ATP-dependent amination of UTP to CTP with either L-glutamine or ammonia as the source of nitrogen. Regulates intracellular CTP levels through interactions with the four ribonucleotide triphosphates. In Chlorobium phaeobacteroides (strain BS1), this protein is CTP synthase.